The primary structure comprises 141 residues: UPF0310 protein SGO_1818 (141 aa).

Belongs to the UPF0310 family.

This Streptococcus gordonii (strain Challis / ATCC 35105 / BCRC 15272 / CH1 / DL1 / V288) protein is UPF0310 protein SGO_1818.